A 223-amino-acid chain; its full sequence is MIF4G domain-containing protein A (223 aa).

An MIF4G domain is found at 7-206 (QEDYKMQAFD…LEMIEYRAAG (200 aa)).

This sequence belongs to the MIF4GD family. Interacts with eif4g1, eif4g2 and slbp; probably tethered by SLBP to the 3'-end of mRNAs ending with the histone stem-loop, it also interacts with eif4g1 which is bound to their 5'-end.

The protein localises to the cytoplasm. It localises to the nucleus. In terms of biological role, functions in replication-dependent translation of histone mRNAs which differ from other eukaryotic mRNAs in that they do not end with a poly-A tail but a stem-loop. May participate in circularizing those mRNAs specifically enhancing their translation. This is MIF4G domain-containing protein A (mif4gd-a) from Xenopus laevis (African clawed frog).